The chain runs to 141 residues: MSNKKIIKIIKLQIPGGKANPAPPIGPALGAAGVNIMGFCKEFNAATQDRPGDLLPVVITVYSDKTFSFVMKQPPVSSLIKKALGLESGSKIPNRNKVGKLARAQITAIAEQKMKDMDVVLLESAERMVEGTARSMGVDVE.

Belongs to the universal ribosomal protein uL11 family. As to quaternary structure, part of the ribosomal stalk of the 50S ribosomal subunit. Interacts with L10 and the large rRNA to form the base of the stalk. L10 forms an elongated spine to which L12 dimers bind in a sequential fashion forming a multimeric L10(L12)X complex. One or more lysine residues are methylated.

Its function is as follows. Forms part of the ribosomal stalk which helps the ribosome interact with GTP-bound translation factors. In Chlamydia muridarum (strain MoPn / Nigg), this protein is Large ribosomal subunit protein uL11.